We begin with the raw amino-acid sequence, 161 residues long: MKLSDIADNAGARKKRMRVGRGIGSGKGKTSGRGGKGQTARSGVRIKGFEGGQMPMHRRLPKRGFNNIFALDFVEINLDRIQQAIDAKKLDAGSVINAEALVKSGALRRAKDGVRLLGRGEITAKVNIEVHGASKSAIAAVEKAGGTVKLLAPAKDEGEAA.

Residues Met-1–Gly-43 are disordered. Gly residues predominate over residues Arg-21–Gly-37.

It belongs to the universal ribosomal protein uL15 family. Part of the 50S ribosomal subunit.

Binds to the 23S rRNA. The protein is Large ribosomal subunit protein uL15 of Bradyrhizobium sp. (strain BTAi1 / ATCC BAA-1182).